Consider the following 132-residue polypeptide: Transcriptional repressor SmtB homolog (132 aa).

8 residues coordinate Zn(2+): Cys20, His26, Cys71, Cys73, Asp114, His116, His127, and Glu130. One can recognise an HTH arsR-type domain in the interval Met38 to Asp132. Residues Val72–Arg91 constitute a DNA-binding region (H-T-H motif).

As to quaternary structure, homodimer.

Transcriptional repressor of the expression of the ziaA gene. Controls zinc homeostasis by triggering ZiaA-mediated efflux of excess zinc into the periplasm. The polypeptide is Transcriptional repressor SmtB homolog (ziaR) (Synechocystis sp. (strain ATCC 27184 / PCC 6803 / Kazusa)).